Consider the following 71-residue polypeptide: Exodeoxyribonuclease 7 small subunit (71 aa).

This sequence belongs to the XseB family. In terms of assembly, heterooligomer composed of large and small subunits.

The protein localises to the cytoplasm. It carries out the reaction Exonucleolytic cleavage in either 5'- to 3'- or 3'- to 5'-direction to yield nucleoside 5'-phosphates.. Bidirectionally degrades single-stranded DNA into large acid-insoluble oligonucleotides, which are then degraded further into small acid-soluble oligonucleotides. This chain is Exodeoxyribonuclease 7 small subunit, found in Endomicrobium trichonymphae.